The following is a 198-amino-acid chain: DnaJ homolog subfamily C member 12 (198 aa).

At Met1 the chain carries N-acetylmethionine. The 66-residue stretch at 14 to 79 folds into the J domain; sequence DYYTLLGCDE…ESRARYDHWR (66 aa). The disordered stretch occupies residues 121 to 183; the sequence is TNTAQNKERS…CGHLHFRWSG (63 aa). Over residues 126–156 the composition is skewed to basic and acidic residues; sequence NKERSEQRETKQGDPDSTPEKMMQKESESPE. 3 positions are modified to phosphoserine: Ser160, Ser166, and Ser182.

Interacts with HSPA8. Interacts with TPH1. Interacts with TPH2.

It localises to the cytoplasm. Probable co-chaperone that participates in the proper folding of biopterin-dependent aromatic amino acid hydroxylases, which include phenylalanine-4-hydroxylase (PAH), tyrosine 3-monooxygenase (TH) and peripheral and neuronal tryptophan hydroxylases (TPH1 and TPH2). This is DnaJ homolog subfamily C member 12 (Dnajc12) from Rattus norvegicus (Rat).